Reading from the N-terminus, the 397-residue chain is Glutamyl-tRNA reductase (397 aa).

Substrate is bound by residues 47 to 50, Ser-98, 103 to 105, and Gln-109; these read TCGR and ETD. The active-site Nucleophile is the Cys-48. 177–182 contacts NADP(+); sequence GAGAVG.

Belongs to the glutamyl-tRNA reductase family. As to quaternary structure, homodimer.

The enzyme catalyses (S)-4-amino-5-oxopentanoate + tRNA(Glu) + NADP(+) = L-glutamyl-tRNA(Glu) + NADPH + H(+). It participates in porphyrin-containing compound metabolism; protoporphyrin-IX biosynthesis; 5-aminolevulinate from L-glutamyl-tRNA(Glu): step 1/2. Catalyzes the NADPH-dependent reduction of glutamyl-tRNA(Glu) to glutamate 1-semialdehyde (GSA). In Pyrobaculum aerophilum (strain ATCC 51768 / DSM 7523 / JCM 9630 / CIP 104966 / NBRC 100827 / IM2), this protein is Glutamyl-tRNA reductase.